The sequence spans 153 residues: Large ribosomal subunit protein uL15 (153 aa).

The disordered stretch occupies residues 21-41 (RGIGSGKGKTGGRGIKGQKSR). Gly residues predominate over residues 23-35 (IGSGKGKTGGRGI).

It belongs to the universal ribosomal protein uL15 family. In terms of assembly, part of the 50S ribosomal subunit.

In terms of biological role, binds to the 23S rRNA. The polypeptide is Large ribosomal subunit protein uL15 (Rickettsia africae (strain ESF-5)).